Here is a 443-residue protein sequence, read N- to C-terminus: Probable D-serine dehydratase (443 aa).

An N6-(pyridoxal phosphate)lysine modification is found at Lys-118.

This sequence belongs to the serine/threonine dehydratase family. DsdA subfamily. It depends on pyridoxal 5'-phosphate as a cofactor.

The catalysed reaction is D-serine = pyruvate + NH4(+). The chain is Probable D-serine dehydratase from Aeromonas hydrophila subsp. hydrophila (strain ATCC 7966 / DSM 30187 / BCRC 13018 / CCUG 14551 / JCM 1027 / KCTC 2358 / NCIMB 9240 / NCTC 8049).